The sequence spans 518 residues: DNA nucleotidylexotransferase (518 aa).

The short motif at F11–K17 is the Nuclear localization signal element. The 98-residue stretch at I27–Q124 folds into the BRCT domain. Residues S153–A518 are mediates interaction with DNTTIP2. The segment at V260–T264 is involved in DNA binding. Residues G335–K340 and H344–D347 each bind a 2'-deoxyribonucleoside 5'-triphosphate. Positions 345, 347, and 442 each coordinate Mg(2+). G457 to W458 contacts a 2'-deoxyribonucleoside 5'-triphosphate.

It belongs to the DNA polymerase type-X family. As to quaternary structure, interacts with PRP19 and DNTTIP1. Interacts with TRERF1. Forms a ternary complex with DNTTIP2 and core histone. Released from this complex by PCNA. Mg(2+) serves as cofactor.

The protein localises to the nucleus. The catalysed reaction is DNA(n) + a 2'-deoxyribonucleoside 5'-triphosphate = DNA(n+1) + diphosphate. Template-independent DNA polymerase which catalyzes the random addition of deoxynucleoside 5'-triphosphate to the 3'-end of a DNA initiator. One of the in vivo functions of this enzyme is the addition of nucleotides at the junction (N region) of rearranged Ig heavy chain and T-cell receptor gene segments during the maturation of B- and T-cells. The polypeptide is DNA nucleotidylexotransferase (DNTT) (Monodelphis domestica (Gray short-tailed opossum)).